The following is a 352-amino-acid chain: Divinyl chlorophyll a/b light-harvesting protein PcbA (352 aa).

The next 6 membrane-spanning stretches (helical) occupy residues 27-47 (FIAA…AFTL), 90-110 (VLAI…GGLL), 142-162 (FILG…VEWA), 203-223 (VMGG…WHIA), 243-263 (AVLS…AFWS), and 306-326 (LANV…WHAL).

Belongs to the PsbB/PsbC family. IsiA/Pcb subfamily. As to quaternary structure, the antenna complex consists of divinyl chlorophylls (a and b) and divinyl chlorophyll a/b binding proteins and binds less divinyl chlorophyll b than does low-light-adapted Prochlorococcus. Also forms complexes with PSII, consisting of a PSII dimer and 4 or 8 PcbA subunits. These complexes are also found under conditions of iron-starvation. It depends on divinyl chlorophyll a as a cofactor. Divinyl chlorophyll b serves as cofactor.

Its subcellular location is the cellular thylakoid membrane. The antenna complex functions as a light receptor, it captures and delivers excitation energy to photosystem II and possibly to photosystem I. The Prochlorales pcb genes are not related to higher plant LHCs. The chain is Divinyl chlorophyll a/b light-harvesting protein PcbA (pcbA) from Prochlorococcus marinus subsp. pastoris (strain CCMP1986 / NIES-2087 / MED4).